Consider the following 729-residue polypeptide: Fatty acid oxidation complex subunit alpha (729 aa).

Residues 1-189 (MLYKGDTLYL…KIGLVDGVVK (189 aa)) form an enoyl-CoA hydratase/isomerase region. D296 is a binding site for substrate. Residues 311 to 729 (ETPKQAAVLG…ARPVGDLKTA (419 aa)) form a 3-hydroxyacyl-CoA dehydrogenase region. NAD(+) contacts are provided by residues M324, D343, 400–402 (VVE), K407, and S429. H450 functions as the For 3-hydroxyacyl-CoA dehydrogenase activity in the catalytic mechanism. Position 453 (N453) interacts with NAD(+). Substrate contacts are provided by N500 and Y660. The tract at residues 708-729 (RHNEPYYPPVEPARPVGDLKTA) is disordered.

The protein in the N-terminal section; belongs to the enoyl-CoA hydratase/isomerase family. In the C-terminal section; belongs to the 3-hydroxyacyl-CoA dehydrogenase family. Heterotetramer of two alpha chains (FadB) and two beta chains (FadA).

The enzyme catalyses a (3S)-3-hydroxyacyl-CoA + NAD(+) = a 3-oxoacyl-CoA + NADH + H(+). It catalyses the reaction a (3S)-3-hydroxyacyl-CoA = a (2E)-enoyl-CoA + H2O. It carries out the reaction a 4-saturated-(3S)-3-hydroxyacyl-CoA = a (3E)-enoyl-CoA + H2O. The catalysed reaction is (3S)-3-hydroxybutanoyl-CoA = (3R)-3-hydroxybutanoyl-CoA. The enzyme catalyses a (3Z)-enoyl-CoA = a 4-saturated (2E)-enoyl-CoA. It catalyses the reaction a (3E)-enoyl-CoA = a 4-saturated (2E)-enoyl-CoA. The protein operates within lipid metabolism; fatty acid beta-oxidation. Functionally, involved in the aerobic and anaerobic degradation of long-chain fatty acids via beta-oxidation cycle. Catalyzes the formation of 3-oxoacyl-CoA from enoyl-CoA via L-3-hydroxyacyl-CoA. It can also use D-3-hydroxyacyl-CoA and cis-3-enoyl-CoA as substrate. The sequence is that of Fatty acid oxidation complex subunit alpha from Escherichia coli (strain K12 / MC4100 / BW2952).